Here is a 135-residue protein sequence, read N- to C-terminus: Large ribosomal subunit protein uL16c (135 aa).

Residues 1–17 (MLSPKRTRFRKQHRGRM) are compositionally biased toward basic residues. Positions 1–20 (MLSPKRTRFRKQHRGRMKGT) are disordered.

The protein belongs to the universal ribosomal protein uL16 family. As to quaternary structure, part of the 50S ribosomal subunit.

Its subcellular location is the plastid. The protein resides in the chloroplast. The chain is Large ribosomal subunit protein uL16c from Lemna minor (Common duckweed).